A 256-amino-acid polypeptide reads, in one-letter code: Ribosomal RNA small subunit methyltransferase A (256 aa).

S-adenosyl-L-methionine-binding residues include asparagine 12, leucine 14, glycine 39, glutamate 60, aspartate 85, and asparagine 103.

Belongs to the class I-like SAM-binding methyltransferase superfamily. rRNA adenine N(6)-methyltransferase family. RsmA subfamily.

It is found in the cytoplasm. It catalyses the reaction adenosine(1518)/adenosine(1519) in 16S rRNA + 4 S-adenosyl-L-methionine = N(6)-dimethyladenosine(1518)/N(6)-dimethyladenosine(1519) in 16S rRNA + 4 S-adenosyl-L-homocysteine + 4 H(+). Functionally, specifically dimethylates two adjacent adenosines (A1518 and A1519) in the loop of a conserved hairpin near the 3'-end of 16S rRNA in the 30S particle. May play a critical role in biogenesis of 30S subunits. The polypeptide is Ribosomal RNA small subunit methyltransferase A (Legionella pneumophila (strain Lens)).